Consider the following 427-residue polypeptide: Dihydrofolate synthetase (427 aa).

34–37 (GKGS) contributes to the ATP binding site. The Mg(2+) site is built by Glu123 and His153. ATP contacts are provided by Arg275 and Asp296.

It belongs to the folylpolyglutamate synthase family.

The protein resides in the cytoplasm. It carries out the reaction 7,8-dihydropteroate + L-glutamate + ATP = 7,8-dihydrofolate + ADP + phosphate + H(+). It participates in cofactor biosynthesis; tetrahydrofolylpolyglutamate biosynthesis. Its function is as follows. Glutamate-adding enzyme which catalyzes the binding of the first glutamyl side chain to dihydropteroate. Leads to the de nove synthesis of tetrahydrofolate. In Saccharomyces cerevisiae (strain ATCC 204508 / S288c) (Baker's yeast), this protein is Dihydrofolate synthetase (FOL3).